A 445-amino-acid polypeptide reads, in one-letter code: Chromosomal replication initiator protein DnaA (445 aa).

The domain I, interacts with DnaA modulators stretch occupies residues Met-1 to Thr-71. Positions Thr-71–Thr-108 are domain II. Positions Glu-83–His-106 are disordered. The interval Asn-109–Ser-325 is domain III, AAA+ region. Gly-153, Gly-155, Lys-156, and Thr-157 together coordinate ATP. Residues Ser-326–Ser-445 form a domain IV, binds dsDNA region.

Belongs to the DnaA family. Oligomerizes as a right-handed, spiral filament on DNA at oriC.

It localises to the cytoplasm. Functionally, plays an essential role in the initiation and regulation of chromosomal replication. ATP-DnaA binds to the origin of replication (oriC) to initiate formation of the DNA replication initiation complex once per cell cycle. Binds the DnaA box (a 9 base pair repeat at the origin) and separates the double-stranded (ds)DNA. Forms a right-handed helical filament on oriC DNA; dsDNA binds to the exterior of the filament while single-stranded (ss)DNA is stabiized in the filament's interior. The ATP-DnaA-oriC complex binds and stabilizes one strand of the AT-rich DNA unwinding element (DUE), permitting loading of DNA polymerase. After initiation quickly degrades to an ADP-DnaA complex that is not apt for DNA replication. Binds acidic phospholipids. This Geobacter sulfurreducens (strain ATCC 51573 / DSM 12127 / PCA) protein is Chromosomal replication initiator protein DnaA.